A 471-amino-acid chain; its full sequence is ATP synthase subunit beta (471 aa).

An ATP-binding site is contributed by 153-160; it reads GGAGVGKT.

It belongs to the ATPase alpha/beta chains family. F-type ATPases have 2 components, CF(1) - the catalytic core - and CF(0) - the membrane proton channel. CF(1) has five subunits: alpha(3), beta(3), gamma(1), delta(1), epsilon(1). CF(0) has four main subunits: a(1), b(1), b'(1) and c(9-12).

The protein resides in the cell membrane. The catalysed reaction is ATP + H2O + 4 H(+)(in) = ADP + phosphate + 5 H(+)(out). Produces ATP from ADP in the presence of a proton gradient across the membrane. The catalytic sites are hosted primarily by the beta subunits. This Roseiflexus sp. (strain RS-1) protein is ATP synthase subunit beta.